The chain runs to 51 residues: Ribosome biogenesis protein Nop10 (51 aa).

The protein belongs to the NOP10 family.

Involved in ribosome biogenesis; more specifically in 18S rRNA pseudouridylation and in cleavage of pre-rRNA. This Methanococcus aeolicus (strain ATCC BAA-1280 / DSM 17508 / OCM 812 / Nankai-3) protein is Ribosome biogenesis protein Nop10.